Here is a 179-residue protein sequence, read N- to C-terminus: Stathmin-2 (179 aa).

Residues 1–26 (MAKTAMAYKEKMKELSMLSLICSCFY) are membrane attachment. Serine 16 bears the Phosphoserine mark. Residues cysteine 22 and cysteine 24 are each lipidated (S-palmitoyl cysteine). The region spanning 38–179 (DDMEVKQINK…NKELQVELSG (142 aa)) is the SLD domain. Residues 39–96 (DMEVKQINKRASGQAFELILKPPSPISEAPRTLASPKKKDLSLEEIQKKLEAAEERRK) are regulatory/phosphorylation domain. Phosphoserine is present on residues serine 50, serine 62, serine 73, and serine 97. Positions 75 to 179 (KKKDLSLEEI…NKELQVELSG (105 aa)) form a coiled coil.

Belongs to the stathmin family. In terms of assembly, interacts with MAPK8. Interacts with ITM2C. Interacts with KIFBP. Interacts (via the N-terminal region) with CIB1 (via C-terminal region); the interaction is direct, occurs in a calcium-dependent manner and attenuates the neurite outgrowth inhibition of STMN2. Post-translationally, sumoylated. Phosphorylated mostly by MAPK8, but also by MAPK9 and MAPK10 in the developing brain cortex. In terms of processing, N-terminal palmitoylation promotes specific anchoring to the cytosolic leaflet of Golgi membranes and subsequent vesicular trafficking along dendrites and axons. Neuronal Stathmins are substrates for palmitoyltransferases ZDHHC3, ZDHHC7 and ZDHHC15. Neuron specific.

It is found in the cytoplasm. It localises to the perinuclear region. The protein localises to the cell projection. Its subcellular location is the growth cone. The protein resides in the membrane. It is found in the axon. It localises to the golgi apparatus. The protein localises to the endosome. Its subcellular location is the lamellipodium. Its function is as follows. Regulator of microtubule stability. When phosphorylated by MAPK8, stabilizes microtubules and consequently controls neurite length in cortical neurons. In the developing brain, negatively regulates the rate of exit from multipolar stage and retards radial migration from the ventricular zone. In Homo sapiens (Human), this protein is Stathmin-2 (STMN2).